Reading from the N-terminus, the 150-residue chain is 3-dehydroquinate dehydratase (150 aa).

The Proton acceptor role is filled by Tyr-26. The substrate site is built by Asn-77, His-83, and Asp-90. His-103 (proton donor) is an active-site residue. Substrate contacts are provided by residues 104 to 105 and Arg-114; that span reads LS.

It belongs to the type-II 3-dehydroquinase family. As to quaternary structure, homododecamer.

The enzyme catalyses 3-dehydroquinate = 3-dehydroshikimate + H2O. It participates in metabolic intermediate biosynthesis; chorismate biosynthesis; chorismate from D-erythrose 4-phosphate and phosphoenolpyruvate: step 3/7. Its function is as follows. Catalyzes a trans-dehydration via an enolate intermediate. The chain is 3-dehydroquinate dehydratase from Photobacterium profundum (strain SS9).